Reading from the N-terminus, the 189-residue chain is Adenylate kinase (189 aa).

Residue 10-15 coordinates ATP; sequence GAGKGT. The NMP stretch occupies residues 30–59; that stretch reads STGDIFRANVSGGTELGKKAQAYMDRGDLV. AMP contacts are provided by residues T31, R36, 57–59, 85–88, and Q92; these read DLV and GFPR. Residues 126–136 are LID; it reads ERARIDNRSDD. Residue R127 participates in ATP binding. R133 and R144 together coordinate AMP. Residue G172 coordinates ATP.

It belongs to the adenylate kinase family. Monomer.

It localises to the cytoplasm. It catalyses the reaction AMP + ATP = 2 ADP. It participates in purine metabolism; AMP biosynthesis via salvage pathway; AMP from ADP: step 1/1. Functionally, catalyzes the reversible transfer of the terminal phosphate group between ATP and AMP. Plays an important role in cellular energy homeostasis and in adenine nucleotide metabolism. In Thermobifida fusca (strain YX), this protein is Adenylate kinase.